Reading from the N-terminus, the 144-residue chain is 3-dehydroquinate dehydratase (144 aa).

Residue tyrosine 24 is the Proton acceptor of the active site. Substrate contacts are provided by asparagine 76, histidine 82, and aspartate 89. Residue histidine 102 is the Proton donor of the active site. Substrate is bound by residues 103-104 (LS) and arginine 113.

It belongs to the type-II 3-dehydroquinase family. As to quaternary structure, homododecamer.

It carries out the reaction 3-dehydroquinate = 3-dehydroshikimate + H2O. Its pathway is metabolic intermediate biosynthesis; chorismate biosynthesis; chorismate from D-erythrose 4-phosphate and phosphoenolpyruvate: step 3/7. Its function is as follows. Catalyzes a trans-dehydration via an enolate intermediate. This chain is 3-dehydroquinate dehydratase, found in Nitrosomonas europaea (strain ATCC 19718 / CIP 103999 / KCTC 2705 / NBRC 14298).